Reading from the N-terminus, the 191-residue chain is dCTP deaminase, dUMP-forming (191 aa).

DCTP-binding positions include 101–106, Asp119, 127–129, Gln148, Tyr162, and Gln174; these read KSSLGR and TLE. Residue Glu129 is the Proton donor/acceptor of the active site. The segment at 169-191 is disordered; the sequence is NRYQGQRGPTASRSHLNFHRTRI. The span at 171–183 shows a compositional bias: polar residues; sequence YQGQRGPTASRSH.

The protein belongs to the dCTP deaminase family. As to quaternary structure, homotrimer.

It carries out the reaction dCTP + 2 H2O = dUMP + NH4(+) + diphosphate. Its pathway is pyrimidine metabolism; dUMP biosynthesis; dUMP from dCTP: step 1/1. Functionally, bifunctional enzyme that catalyzes both the deamination of dCTP to dUTP and the hydrolysis of dUTP to dUMP without releasing the toxic dUTP intermediate. The chain is dCTP deaminase, dUMP-forming from Pseudarthrobacter chlorophenolicus (strain ATCC 700700 / DSM 12829 / CIP 107037 / JCM 12360 / KCTC 9906 / NCIMB 13794 / A6) (Arthrobacter chlorophenolicus).